Consider the following 392-residue polypeptide: Queuine tRNA-ribosyltransferase (392 aa).

Asp93 functions as the Proton acceptor in the catalytic mechanism. Substrate-binding positions include 93 to 97 (DSGGY), Asp147, Gln189, and Gly216. Residues 247–253 (GVGAPED) form an RNA binding region. Asp266 (nucleophile) is an active-site residue. Residues 271–275 (TRVAR) are RNA binding; important for wobble base 34 recognition. Residues Cys304, Cys306, Cys309, and His335 each coordinate Zn(2+).

It belongs to the queuine tRNA-ribosyltransferase family. In terms of assembly, homodimer. Within each dimer, one monomer is responsible for RNA recognition and catalysis, while the other monomer binds to the replacement base PreQ1. The cofactor is Zn(2+).

The enzyme catalyses 7-aminomethyl-7-carbaguanine + guanosine(34) in tRNA = 7-aminomethyl-7-carbaguanosine(34) in tRNA + guanine. It functions in the pathway tRNA modification; tRNA-queuosine biosynthesis. Catalyzes the base-exchange of a guanine (G) residue with the queuine precursor 7-aminomethyl-7-deazaguanine (PreQ1) at position 34 (anticodon wobble position) in tRNAs with GU(N) anticodons (tRNA-Asp, -Asn, -His and -Tyr). Catalysis occurs through a double-displacement mechanism. The nucleophile active site attacks the C1' of nucleotide 34 to detach the guanine base from the RNA, forming a covalent enzyme-RNA intermediate. The proton acceptor active site deprotonates the incoming PreQ1, allowing a nucleophilic attack on the C1' of the ribose to form the product. After dissociation, two additional enzymatic reactions on the tRNA convert PreQ1 to queuine (Q), resulting in the hypermodified nucleoside queuosine (7-(((4,5-cis-dihydroxy-2-cyclopenten-1-yl)amino)methyl)-7-deazaguanosine). This Dehalococcoides mccartyi (strain ATCC BAA-2266 / KCTC 15142 / 195) (Dehalococcoides ethenogenes (strain 195)) protein is Queuine tRNA-ribosyltransferase.